Here is a 332-residue protein sequence, read N- to C-terminus: Tryptophan--tRNA ligase (332 aa).

Residues 11–13 and 19–20 contribute to the ATP site; these read QPS and GN. The short motif at 12-20 is the 'HIGH' region element; the sequence is PSGELTIGN. D135 contributes to the L-tryptophan binding site. ATP-binding positions include 147–149, V186, and 195–199; these read GQD and KMSKS. A 'KMSKS' region motif is present at residues 195 to 199; it reads KMSKS.

This sequence belongs to the class-I aminoacyl-tRNA synthetase family. As to quaternary structure, homodimer.

The protein localises to the cytoplasm. The enzyme catalyses tRNA(Trp) + L-tryptophan + ATP = L-tryptophyl-tRNA(Trp) + AMP + diphosphate + H(+). Its function is as follows. Catalyzes the attachment of tryptophan to tRNA(Trp). In Shewanella oneidensis (strain ATCC 700550 / JCM 31522 / CIP 106686 / LMG 19005 / NCIMB 14063 / MR-1), this protein is Tryptophan--tRNA ligase.